The sequence spans 55 residues: LTYYTPEYETKGLLLHXHRMSGGDHIHAGXVVGKEITLGFVDLLRVALEACVQAR.

His-18 functions as the Proton acceptor in the catalytic mechanism. The substrate site is built by Arg-19 and His-27.

This sequence belongs to the RuBisCO large chain family. Type I subfamily. Heterohexadecamer of 8 large chains and 8 small chains; disulfide-linked. The disulfide link is formed within the large subunit homodimers. It depends on Mg(2+) as a cofactor. The disulfide bond which can form in the large chain dimeric partners within the hexadecamer appears to be associated with oxidative stress and protein turnover.

It is found in the plastid. Its subcellular location is the chloroplast. It catalyses the reaction 2 (2R)-3-phosphoglycerate + 2 H(+) = D-ribulose 1,5-bisphosphate + CO2 + H2O. It carries out the reaction D-ribulose 1,5-bisphosphate + O2 = 2-phosphoglycolate + (2R)-3-phosphoglycerate + 2 H(+). In terms of biological role, ruBisCO catalyzes two reactions: the carboxylation of D-ribulose 1,5-bisphosphate, the primary event in carbon dioxide fixation, as well as the oxidative fragmentation of the pentose substrate in the photorespiration process. Both reactions occur simultaneously and in competition at the same active site. The polypeptide is Ribulose bisphosphate carboxylase large chain (Vitis sp. (Grape)).